The sequence spans 212 residues: Probable U3 small nucleolar RNA-associated protein 11 (212 aa).

This sequence belongs to the UTP11 family. In terms of assembly, component of the ribosomal small subunit (SSU) processome.

It is found in the nucleus. It localises to the nucleolus. In terms of biological role, involved in nucleolar processing of pre-18S ribosomal RNA. The chain is Probable U3 small nucleolar RNA-associated protein 11 from Plasmodium falciparum (isolate 3D7).